Here is a 365-residue protein sequence, read N- to C-terminus: Eukaryotic translation initiation factor 3 subunit H (365 aa).

Residues Ile15–Ala166 enclose the MPN domain.

It belongs to the eIF-3 subunit H family. Component of the eukaryotic translation initiation factor 3 (eIF-3) complex.

It is found in the cytoplasm. In terms of biological role, component of the eukaryotic translation initiation factor 3 (eIF-3) complex, which is involved in protein synthesis of a specialized repertoire of mRNAs and, together with other initiation factors, stimulates binding of mRNA and methionyl-tRNAi to the 40S ribosome. The eIF-3 complex specifically targets and initiates translation of a subset of mRNAs involved in cell proliferation. This Caenorhabditis elegans protein is Eukaryotic translation initiation factor 3 subunit H.